Reading from the N-terminus, the 211-residue chain is Late expression factor 7 (211 aa).

Its function is as follows. Involved in late/very late gene activation. This chain is Late expression factor 7 (LEF-7), found in Orgyia pseudotsugata multicapsid polyhedrosis virus (OpMNPV).